The following is a 467-amino-acid chain: Serine/threonine-protein kinase AFC1 (467 aa).

In terms of domain architecture, Protein kinase spans 115–443; the sequence is YQILSKMGEG…AREALNHPFF (329 aa). ATP contacts are provided by residues 121–129 and lysine 144; that span reads MGEGTFGQV. The active-site Proton acceptor is aspartate 240. Positions 447 to 467 are disordered; that stretch reads REQSIPPFNPNPHPFLYNQKN.

Belongs to the protein kinase superfamily. CMGC Ser/Thr protein kinase family. Lammer subfamily.

It catalyses the reaction L-seryl-[protein] + ATP = O-phospho-L-seryl-[protein] + ADP + H(+). The enzyme catalyses L-threonyl-[protein] + ATP = O-phospho-L-threonyl-[protein] + ADP + H(+). It carries out the reaction L-tyrosyl-[protein] + ATP = O-phospho-L-tyrosyl-[protein] + ADP + H(+). Its function is as follows. Activator of yeast transcription factor, STE12. In Arabidopsis thaliana (Mouse-ear cress), this protein is Serine/threonine-protein kinase AFC1 (AFC1).